Consider the following 146-residue polypeptide: Hemoglobin subunit beta-1 (146 aa).

A Globin domain is found at 2 to 146 (GLTAHDRQLI…IADALGKGYH (145 aa)). Heme b-binding residues include histidine 63 and histidine 92.

It belongs to the globin family. In terms of assembly, heterotetramer of two alpha chains and two beta chains. Red blood cells.

Functionally, involved in oxygen transport from the lung to the various peripheral tissues. The chain is Hemoglobin subunit beta-1 (hbb1) from Xenopus laevis (African clawed frog).